The following is a 152-amino-acid chain: Phospholipase A2 GL16-1 (152 aa).

An N-terminal signal peptide occupies residues 1–21 (MNPAHLLVLLAVCVSLLGAST). The propeptide occupies 22 to 27 (IPPLPL). 7 disulfide bridges follow: Cys38–Cys104, Cys54–Cys151, Cys56–Cys72, Cys71–Cys132, Cys78–Cys125, Cys88–Cys118, and Cys111–Cys123. Residues Tyr55, Gly57, and Gly59 each coordinate Ca(2+). The active site involves His75. Asp76 serves as a coordination point for Ca(2+). Residue Asp126 is part of the active site.

Belongs to the phospholipase A2 family. Group I subfamily. Ca(2+) serves as cofactor.

It is found in the secreted. The catalysed reaction is a 1,2-diacyl-sn-glycero-3-phosphocholine + H2O = a 1-acyl-sn-glycero-3-phosphocholine + a fatty acid + H(+). Its function is as follows. PA2 catalyzes the calcium-dependent hydrolysis of the 2-acyl groups in 3-sn-phosphoglycerides. This Laticauda semifasciata (Black-banded sea krait) protein is Phospholipase A2 GL16-1.